The following is a 457-amino-acid chain: MLSSQTSTIFTVSRLNQTVRLLLEQEMGQVWISGEISNFTQPASGHWYFTLKDDTAQVRCAMFRNSNRRVTFRPQHGQQVLVRANITLYEPRGDYQIIIESMQPAGEGLLQQKYELLKAKLQAEGLFDQQYKQPLPSPAHCVGVITSKTGAALHDILHVLKRRDPSLPVIIYPTAVQGDDAPGQIVRAIERANARNECDVLIVGRGGGSLEDLWSFNDERVARAIFASRIPVVSAVGHETDVTIADFVADLRAPTPSAAAEIVSRNQQELLRQIQSAQQRLGMAMDYYLANRNRRFTQLFHRLQQQHPQLRLARQQTMLERLRQRMNFALDNQLKRAASRQQRVLQRLNQQNPQPRIYRAQTRIQQLEYRLAENVRARLSATRERFGNAVTHLEAVSPLSTLARGYSVTTATDGKVLKQTRQVKAGDVLTTRLSDGWVESEVKGVTTAKKTRRKKTD.

This sequence belongs to the XseA family. Heterooligomer composed of large and small subunits.

The protein resides in the cytoplasm. It catalyses the reaction Exonucleolytic cleavage in either 5'- to 3'- or 3'- to 5'-direction to yield nucleoside 5'-phosphates.. In terms of biological role, bidirectionally degrades single-stranded DNA into large acid-insoluble oligonucleotides, which are then degraded further into small acid-soluble oligonucleotides. This chain is Exodeoxyribonuclease 7 large subunit, found in Citrobacter koseri (strain ATCC BAA-895 / CDC 4225-83 / SGSC4696).